We begin with the raw amino-acid sequence, 75 residues long: Exodeoxyribonuclease 7 small subunit (75 aa).

It belongs to the XseB family. As to quaternary structure, heterooligomer composed of large and small subunits.

It localises to the cytoplasm. It catalyses the reaction Exonucleolytic cleavage in either 5'- to 3'- or 3'- to 5'-direction to yield nucleoside 5'-phosphates.. In terms of biological role, bidirectionally degrades single-stranded DNA into large acid-insoluble oligonucleotides, which are then degraded further into small acid-soluble oligonucleotides. This Listeria monocytogenes serotype 4b (strain CLIP80459) protein is Exodeoxyribonuclease 7 small subunit.